A 196-amino-acid polypeptide reads, in one-letter code: RNA-free ribonuclease P (196 aa).

This sequence belongs to the HARP family.

It catalyses the reaction Endonucleolytic cleavage of RNA, removing 5'-extranucleotides from tRNA precursor.. RNA-free RNase P that catalyzes the removal of the 5'-leader sequence from pre-tRNA to produce the mature 5'-terminus. In Thermodesulfovibrio yellowstonii (strain ATCC 51303 / DSM 11347 / YP87), this protein is RNA-free ribonuclease P.